The primary structure comprises 145 residues: uncharacterized protein (145 aa).

The signal sequence occupies residues 1–20 (MPSKVCTLILLFSVINQMKC).

This is an uncharacterized protein from Caenorhabditis elegans.